Consider the following 208-residue polypeptide: ATP-dependent Clp protease proteolytic subunit (208 aa).

Ser-111 serves as the catalytic Nucleophile. His-136 is an active-site residue.

The protein belongs to the peptidase S14 family. Fourteen ClpP subunits assemble into 2 heptameric rings which stack back to back to give a disk-like structure with a central cavity, resembling the structure of eukaryotic proteasomes.

The protein resides in the cytoplasm. It carries out the reaction Hydrolysis of proteins to small peptides in the presence of ATP and magnesium. alpha-casein is the usual test substrate. In the absence of ATP, only oligopeptides shorter than five residues are hydrolyzed (such as succinyl-Leu-Tyr-|-NHMec, and Leu-Tyr-Leu-|-Tyr-Trp, in which cleavage of the -Tyr-|-Leu- and -Tyr-|-Trp bonds also occurs).. Cleaves peptides in various proteins in a process that requires ATP hydrolysis. Has a chymotrypsin-like activity. Plays a major role in the degradation of misfolded proteins. The protein is ATP-dependent Clp protease proteolytic subunit of Vibrio campbellii (strain ATCC BAA-1116).